Reading from the N-terminus, the 266-residue chain is Bidirectional sugar transporter SWEET7b (266 aa).

At 1–9 the chain is on the extracellular side; it reads MVSPDLIRN. The helical transmembrane segment at 10 to 30 threads the bilayer; the sequence is MVGIVGNIISFGLFLSPVPTF. The 88-residue stretch at 10 to 97 folds into the MtN3/slv 1 domain; it reads MVGIVGNIIS…TIFFLFSDKK (88 aa). The Cytoplasmic portion of the chain corresponds to 31–45; that stretch reads YRIIKNKDVQDFKAD. A helical membrane pass occupies residues 46–66; the sequence is PYLATLLNCMLWVFYGLPIVH. Over 67 to 69 the chain is Extracellular; the sequence is PNS. The helical transmembrane segment at 70 to 90 threads the bilayer; the sequence is ILVVTINGIGLIIEAVYLTIF. At 91-101 the chain is on the cytoplasmic side; that stretch reads FLFSDKKNKKK. A helical membrane pass occupies residues 102-122; that stretch reads MGVVLATEALFMAAVVLGVLL. The Extracellular portion of the chain corresponds to 123–131; the sequence is GAHTHQRRS. Residues 132 to 152 form a helical membrane-spanning segment; it reads LIVGILCAIFGTIMYSSPLTI. A MtN3/slv 2 domain is found at 133–216; sequence IVGILCAIFG…LILYAIYYRT (84 aa). The Cytoplasmic segment spans residues 153 to 165; sequence MSQVVKTKSVEYM. The helical transmembrane segment at 166 to 186 threads the bilayer; that stretch reads PLLLSVVSFLNGLCWTSYALI. Residues 187–189 lie on the Extracellular side of the membrane; that stretch reads RLD. The helical transmembrane segment at 190 to 210 threads the bilayer; it reads IFITIPNGLGVLFALMQLILY. Residues 211–266 are Cytoplasmic-facing; the sequence is AIYYRTTPKKQDKNLELPTVAPVAKDTSIVTPVSKDDDVVDGGNASHVTINITIEP.

It belongs to the SWEET sugar transporter family. Forms homooligomers and/or heterooligomers.

Its subcellular location is the cell membrane. Functionally, mediates both low-affinity uptake and efflux of sugar across the plasma membrane. The chain is Bidirectional sugar transporter SWEET7b (SWEET7B) from Oryza sativa subsp. indica (Rice).